The primary structure comprises 599 residues: Sulfite reductase [NADPH] flavoprotein alpha-component (599 aa).

In terms of domain architecture, Flavodoxin-like spans 64 to 202; it reads ITIISASQTG…AASEWRARVV (139 aa). FMN-binding positions include 70-75, 117-120, and 153-162; these read SQTGNA, STQG, and LGDSSYEFFC. Positions 234-448 constitute an FAD-binding FR-type domain; it reads DAPLVASLSV…IEHNDNFRLP (215 aa). FAD-binding positions include T322, A356, 386 to 389, 404 to 406, Y410, and 419 to 422; these read RLYS, TVG, and GGAS. Residues 519–520, 525–529, and D561 each bind NADP(+); these read SR and KVYVQ. Y599 is an FAD binding site.

The protein belongs to the NADPH-dependent sulphite reductase flavoprotein subunit CysJ family. In the N-terminal section; belongs to the flavodoxin family. It in the C-terminal section; belongs to the flavoprotein pyridine nucleotide cytochrome reductase family. Alpha(8)-beta(8). The alpha component is a flavoprotein, the beta component is a hemoprotein. The cofactor is FAD. It depends on FMN as a cofactor.

The enzyme catalyses hydrogen sulfide + 3 NADP(+) + 3 H2O = sulfite + 3 NADPH + 4 H(+). The protein operates within sulfur metabolism; hydrogen sulfide biosynthesis; hydrogen sulfide from sulfite (NADPH route): step 1/1. In terms of biological role, component of the sulfite reductase complex that catalyzes the 6-electron reduction of sulfite to sulfide. This is one of several activities required for the biosynthesis of L-cysteine from sulfate. The flavoprotein component catalyzes the electron flow from NADPH -&gt; FAD -&gt; FMN to the hemoprotein component. In Escherichia coli (strain ATCC 8739 / DSM 1576 / NBRC 3972 / NCIMB 8545 / WDCM 00012 / Crooks), this protein is Sulfite reductase [NADPH] flavoprotein alpha-component.